Consider the following 403-residue polypeptide: Histidine--tRNA ligase (403 aa).

The protein belongs to the class-II aminoacyl-tRNA synthetase family. Homodimer.

The protein localises to the cytoplasm. The enzyme catalyses tRNA(His) + L-histidine + ATP = L-histidyl-tRNA(His) + AMP + diphosphate + H(+). The sequence is that of Histidine--tRNA ligase from Sulfurovum sp. (strain NBC37-1).